The sequence spans 380 residues: DNA replication and repair protein RecF (380 aa).

Residue 30-37 coordinates ATP; the sequence is GPNGFGKT.

Belongs to the RecF family.

The protein localises to the cytoplasm. Functionally, the RecF protein is involved in DNA metabolism; it is required for DNA replication and normal SOS inducibility. RecF binds preferentially to single-stranded, linear DNA. It also seems to bind ATP. The sequence is that of DNA replication and repair protein RecF from Mycobacterium sp. (strain JLS).